The chain runs to 262 residues: Type II restriction enzyme HinfI (262 aa).

The enzyme catalyses Endonucleolytic cleavage of DNA to give specific double-stranded fragments with terminal 5'-phosphates.. In terms of biological role, a P subtype restriction enzyme that recognizes the double-stranded sequence 5'-GANTC-3' and cleaves after G-1. This chain is Type II restriction enzyme HinfI (hinfIR), found in Haemophilus influenzae.